A 117-amino-acid chain; its full sequence is Large ribosomal subunit protein bL17 (117 aa).

This sequence belongs to the bacterial ribosomal protein bL17 family. As to quaternary structure, part of the 50S ribosomal subunit. Contacts protein L32.

This Endomicrobium trichonymphae protein is Large ribosomal subunit protein bL17.